Reading from the N-terminus, the 185-residue chain is CASP-like protein 5A1 (185 aa).

Residues 1–48 lie on the Cytoplasmic side of the membrane; the sequence is MNVSHPAVHPVGVPPALGGQAVPPRMRMRVRMEYLVFQGMPLPGSLGG. Residues 49–69 traverse the membrane as a helical segment; sequence LMLRLGQFCSALIAFSVMVSI. The Extracellular segment spans residues 70–76; the sequence is RDFSVTA. Residues 77–97 form a helical membrane-spanning segment; the sequence is FCYLLAATVLQCLWSLALAVI. At 98–121 the chain is on the cytoplasmic side; it reads DVYALLVKRSLRNPLLVSIFVVGD. The helical transmembrane segment at 122–142 threads the bilayer; it reads GVTATLTFAAACASAGVVVLI. The Extracellular portion of the chain corresponds to 143–160; it reads GNDISMCKSNPCANYEAA. A helical transmembrane segment spans residues 161–181; that stretch reads IIMAFLSWFMVSISFVLTFWM. At 182–185 the chain is on the cytoplasmic side; it reads LATL.

Belongs to the Casparian strip membrane proteins (CASP) family. Homodimer and heterodimers.

It localises to the cell membrane. This chain is CASP-like protein 5A1, found in Pinus contorta (Shore pine).